The primary structure comprises 437 residues: Cytochrome c biogenesis protein Ccs1 (437 aa).

3 helical membrane-spanning segments follow: residues 23 to 43 (LQFS…GTII), 82 to 102 (TWWF…CSLS), and 168 to 188 (LAPI…VLGL).

Belongs to the Ccs1/CcsB family. As to quaternary structure, may interact with CcsA.

Its subcellular location is the plastid. It is found in the chloroplast thylakoid membrane. Required during biogenesis of c-type cytochromes (cytochrome c6 and cytochrome f) at the step of heme attachment. This Porphyra purpurea (Red seaweed) protein is Cytochrome c biogenesis protein Ccs1.